The chain runs to 149 residues: Alpha-crystallin A chain (149 aa).

Residues 41 to 149 (LFRSVLESGI…DPTHSERPIP (109 aa)) form the sHSP domain. The Zn(2+) site is built by His89, Glu91, His96, and His143.

Belongs to the small heat shock protein (HSP20) family. Heteropolymer composed of three CRYAA and one CRYAB subunits. Inter-subunit bridging via zinc ions enhances stability, which is crucial as there is no protein turn over in the lens. Can also form homodimers and homotetramers (dimers of dimers) which serve as the building blocks of homooligomers. Within homooligomers, the zinc-binding motif is created from residues of 3 different molecules. His-89 and Glu-91 from one molecule are ligands of the zinc ion, and His-96 and His-143 residues from additional molecules complete the site with tetrahedral coordination geometry.

Its subcellular location is the cytoplasm. The protein localises to the nucleus. In terms of biological role, contributes to the transparency and refractive index of the lens. May act as a chaperone, preventing aggregation of various proteins under a wide range of stress conditions. The sequence is that of Alpha-crystallin A chain (CRYAA) from Anas platyrhynchos (Mallard).